Consider the following 118-residue polypeptide: Large ribosomal subunit protein bL20 (118 aa).

The protein belongs to the bacterial ribosomal protein bL20 family.

Binds directly to 23S ribosomal RNA and is necessary for the in vitro assembly process of the 50S ribosomal subunit. It is not involved in the protein synthesizing functions of that subunit. The sequence is that of Large ribosomal subunit protein bL20 from Syntrophotalea carbinolica (strain DSM 2380 / NBRC 103641 / GraBd1) (Pelobacter carbinolicus).